The following is a 411-amino-acid chain: Diels-Alderase ffsF (411 aa).

An N-terminal signal peptide occupies residues 1 to 17 (MTQIKLLLLSLAITAQS).

The protein belongs to the Diels-Alderase family.

It participates in mycotoxin biosynthesis. In terms of biological role, diels-Alderase; part of the gene cluster that mediates the biosynthesis of the cytotoxic leucine-containing cytochalasans, including aspochalasin C, aspochalasin E, TMC-169, flavichalasine F, aspergillin PZ, aspochalasin M and flavichalasine G. The first step in the pathway is catalyzed by the hybrid PKS-NRPS ffsA that utilizes 8 units of malonyl-CoA to iteratively assemble the octaketide chain before addition of L-leucine by the C-terminal NRPS modules. Because ffsA lacks a designated enoylreductase (ER) domain, the required activity is provided the enoyl reductase fssC. The methyltransferase (MT) domain of ffsA catalyzes the alpha-methylation at C10 and C14 using S-adenosyl-L-methionine as the methyl-donating cosubstrate. Reduction by the hydrolyase ffsE, followed by dehydration and intra-molecular Diels-Alder cyclization by the Diels-Alderase ffsF then yield the required isoindolone-fused macrocycle. A number of oxidative steps catalyzed by the tailoring cytochrome P450 monooxygenase ffsD, the FAD-linked oxidoreductase ffsJ and the short-chain dehydrogenase/reductase ffsI, are further required to afford the final products. The chain is Diels-Alderase ffsF from Aspergillus flavipes.